A 162-amino-acid polypeptide reads, in one-letter code: Ribosomal RNA large subunit methyltransferase H (162 aa).

Residues L78, G109, and 128–133 (LSALTL) contribute to the S-adenosyl-L-methionine site.

This sequence belongs to the RNA methyltransferase RlmH family. Homodimer.

The protein resides in the cytoplasm. The enzyme catalyses pseudouridine(1915) in 23S rRNA + S-adenosyl-L-methionine = N(3)-methylpseudouridine(1915) in 23S rRNA + S-adenosyl-L-homocysteine + H(+). Specifically methylates the pseudouridine at position 1915 (m3Psi1915) in 23S rRNA. This Psychrobacter arcticus (strain DSM 17307 / VKM B-2377 / 273-4) protein is Ribosomal RNA large subunit methyltransferase H.